Here is a 328-residue protein sequence, read N- to C-terminus: Tetraacyldisaccharide 4'-kinase (328 aa).

ATP is bound at residue 59 to 66 (TAGGNGKT).

Belongs to the LpxK family.

It catalyses the reaction a lipid A disaccharide + ATP = a lipid IVA + ADP + H(+). It participates in glycolipid biosynthesis; lipid IV(A) biosynthesis; lipid IV(A) from (3R)-3-hydroxytetradecanoyl-[acyl-carrier-protein] and UDP-N-acetyl-alpha-D-glucosamine: step 6/6. In terms of biological role, transfers the gamma-phosphate of ATP to the 4'-position of a tetraacyldisaccharide 1-phosphate intermediate (termed DS-1-P) to form tetraacyldisaccharide 1,4'-bis-phosphate (lipid IVA). The sequence is that of Tetraacyldisaccharide 4'-kinase from Aliivibrio fischeri (strain ATCC 700601 / ES114) (Vibrio fischeri).